The following is a 463-amino-acid chain: Elongation factor 1-alpha (463 aa).

At G2 the chain carries N,N,N-trimethylglycine. An N6,N6-dimethyllysine; alternate modification is found at K3. N6-methyllysine; alternate is present on K3. The tr-type G domain maps to 5 to 239; it reads KNHVNVVVIG…DAIEPPSRPT (235 aa). The tract at residues 14-21 is G1; the sequence is GHVDSGKS. 14–21 contacts GTP; it reads GHVDSGKS. K30 is modified (N6-methyllysine). The interval 70–74 is G2; sequence GITID. Position 79 is an N6,N6,N6-trimethyllysine (K79). Positions 91–94 are G3; the sequence is DAPG. Residues 91-95 and 153-156 each bind GTP; these read DAPGH and NKMD. The segment at 153 to 156 is G4; the sequence is NKMD. Positions 191-193 are G5; that stretch reads SGW. An N6,N6-dimethyllysine; alternate modification is found at K315. Residue K315 is modified to N6-methyllysine; alternate. K389 bears the N6-methyllysine mark.

The protein belongs to the TRAFAC class translation factor GTPase superfamily. Classic translation factor GTPase family. EF-Tu/EF-1A subfamily.

The protein localises to the cytoplasm. Its function is as follows. This protein promotes the GTP-dependent binding of aminoacyl-tRNA to the A-site of ribosomes during protein biosynthesis. This is Elongation factor 1-alpha (TEF) from Puccinia graminis (Black stem rust fungus).